A 466-amino-acid polypeptide reads, in one-letter code: Oryzain beta chain (466 aa).

Residues 1-21 form the signal peptide; it reads MAARAAAAAFLLLLIVGAATA. Residues 22 to 140 constitute a propeptide, activation peptide; the sequence is APDMSIISYN…ERYRHDGVEE (119 aa). 3 disulfide bridges follow: cysteine 162-cysteine 205, cysteine 196-cysteine 238, and cysteine 296-cysteine 347. Cysteine 165 is an active-site residue. Active-site residues include histidine 302 and asparagine 322. The N-linked (GlcNAc...) asparagine glycan is linked to asparagine 341. The segment at 358-380 is disordered; sequence KSGANPPKPSPTPPTPPTPPPPS. Positions 362–466 are cleaved as a propeptide — removed in mature form; it reads NPPKPSPTPP…KRTLAKLNTA (105 aa). The span at 363 to 380 shows a compositional bias: pro residues; that stretch reads PPKPSPTPPTPPTPPPPS. 2 disulfide bridges follow: cysteine 386/cysteine 398 and cysteine 392/cysteine 413. N-linked (GlcNAc...) asparagine glycosylation occurs at asparagine 389.

Belongs to the peptidase C1 family. In terms of tissue distribution, expressed only in seeds.

Functionally, probable thiol protease. The chain is Oryzain beta chain from Oryza sativa subsp. japonica (Rice).